Consider the following 569-residue polypeptide: Vacuolar protein sorting-associated protein 45 homolog (569 aa).

Belongs to the STXBP/unc-18/SEC1 family. In terms of assembly, interacts with both SYP41 or SYP42 and VTI12, but in different domains of the trans-Golgi network. Does not interact on the pervacuolar compartment with VTI11, SYP21 or SYP22, or on the cis-Golgi with SYP31. Interacts at the trans-Golgi network (TGN) with the SYP41/SYP61/VTI12 SNARE complex. In terms of tissue distribution, highly expressed in roots, lower expression in leaves, stems and flowers.

The protein localises to the golgi apparatus. The protein resides in the trans-Golgi network membrane. It localises to the early endosome. In terms of biological role, involved in the protein transport to the vacuole, probably at the level of vesicle fusion at the trans-Golgi network (TGN) and not in transport from the TGN to the prevacuolar compartment, by promoting the recycling of vacuolar sorting receptors back to the TGN. Involved in early endosomal vesicle trafficking, particularly at the trans-Golgi-network/early endosome (TGN/EE) thus residing in early endocytic route. Together with BIG5/BEN1 required for polar PIN-FORMED (PIN) proteins localization, for their dynamic repolarization, and consequently for auxin activity gradient formation and auxin-related developmental processes (e.g. embryonic patterning, organogenesis and vasculature venation patterning). Necessary for pollen germination and for cell expansion. Binds syntaxins. The polypeptide is Vacuolar protein sorting-associated protein 45 homolog (Arabidopsis thaliana (Mouse-ear cress)).